The chain runs to 212 residues: Cytochrome c biogenesis ATP-binding export protein CcmA (212 aa).

The ABC transporter domain occupies 7-209 (LSLQNLSCQR…HLQKLNLAAY (203 aa)). 39-46 (GHNGIGKT) contributes to the ATP binding site.

This sequence belongs to the ABC transporter superfamily. CcmA exporter (TC 3.A.1.107) family. The complex is composed of two ATP-binding proteins (CcmA) and two transmembrane proteins (CcmB).

It localises to the cell inner membrane. The enzyme catalyses heme b(in) + ATP + H2O = heme b(out) + ADP + phosphate + H(+). Part of the ABC transporter complex CcmAB involved in the biogenesis of c-type cytochromes; once thought to export heme, this seems not to be the case, but its exact role is uncertain. Responsible for energy coupling to the transport system. This chain is Cytochrome c biogenesis ATP-binding export protein CcmA, found in Haemophilus influenzae (strain ATCC 51907 / DSM 11121 / KW20 / Rd).